Here is a 293-residue protein sequence, read N- to C-terminus: Probable chromosome 2-partitioning protein ParB (293 aa).

Belongs to the ParB family.

In terms of biological role, involved in chromosome partition. Localize to both poles of the predivisional cell following completion of DNA replication. Binds to the DNA origin of replication. The protein is Probable chromosome 2-partitioning protein ParB (parB2) of Deinococcus radiodurans (strain ATCC 13939 / DSM 20539 / JCM 16871 / CCUG 27074 / LMG 4051 / NBRC 15346 / NCIMB 9279 / VKM B-1422 / R1).